The following is a 532-amino-acid chain: MGLSLSLLLSAWKEVVTTQFFSFKNPVESFLETRSFSLKLKEGGLTSRTNSFKSENPQEKSPKTGMERSLSFNSWEIVTEVETEPMNKEDEEIVEPTKPARNSLNGRNCERIQITKPTITPPTPFVFFSPRPVTELDAAATTLQKVYKSYRTRRNLADCAVVVEELWWKTLDAAALNLSSVAFFEEEKHETAVSKWARARTRAAKVGKGLSKDEKAQKLALQHWLEAIDPRHRYGHNLHFYYDVWSASMSAQPFFYWLDIGDGKDVNLEHHPRSVLQKQCIKYLGPLEREAYEVIVEDGKLMNKQSMTLINSTEDSKSIFVLSTTRTLYVGQKKKGRFQHSSFLSGGATTAAGRLVAREGILEAIWPYSGHYLPTEDNFNEFISFLEENNVDMTNVKRCSVNEEYSSFNSSGYEEEATKEEEAEKKPAETIVTEEQEEEKERERPVFQLAKRLSCKWNSGVGPRIGCVRDYPMELQSQAFEQVSLSPRISPGSTRFPSPYGPIPSPRPSPRVRVSPRLAYMGIPSPRVQVNC.

2 disordered regions span residues 47–67 (SRTN…TGME) and 85–104 (PMNK…RNSL). Residues 56-66 (NPQEKSPKTGM) show a composition bias toward basic and acidic residues. Over residues 85–94 (PMNKEDEEIV) the composition is skewed to acidic residues. The IQ domain maps to 136 to 165 (LDAAATTLQKVYKSYRTRRNLADCAVVVEE). 2 disordered regions span residues 410-443 (SSGY…KERE) and 487-513 (PRIS…PRVR). Residues 487 to 496 (PRISPGSTRF) are compositionally biased toward polar residues. The span at 499–509 (PYGPIPSPRPS) shows a compositional bias: pro residues.

Expressed in roots, cauline leaves and flowers, and at lower levels in rosette leaves, stems and siliques.

It is found in the cytoplasm. It localises to the nucleus. May be involved in biotic and abiotic stress responses. In Arabidopsis thaliana (Mouse-ear cress), this protein is IQ domain-containing protein IQM4.